The following is a 251-amino-acid chain: Putative glutathione-independent glyoxalase hsp3105 (251 aa).

It belongs to the peptidase C56 family. HSP31-like subfamily.

It localises to the cytoplasm. The protein localises to the nucleus. It carries out the reaction methylglyoxal + H2O = (R)-lactate + H(+). Its function is as follows. May catalyze the conversion of methylglyoxal (MG) to D-lactate in a single glutathione (GSH)-independent step. May play a role in detoxifying endogenously produced glyoxals. Involved in protection against reactive oxygen species (ROS). The chain is Putative glutathione-independent glyoxalase hsp3105 from Schizosaccharomyces pombe (strain 972 / ATCC 24843) (Fission yeast).